We begin with the raw amino-acid sequence, 200 residues long: Mediator of RNA polymerase II transcription subunit 29 (200 aa).

Composition is skewed to low complexity over residues 1–21 (MAAS…SGPS) and 36–48 (AQLV…GLLQ). The interval 1–48 (MAASQQQASAASSAAGVSGPSSAGGPGPQQQPQPPAQLVGPAQSGLLQ) is disordered. The residue at position 2 (Ala-2) is an N-acetylalanine.

Belongs to the Mediator complex subunit 29 family. Component of the Mediator complex, which is composed of MED1, MED4, MED6, MED7, MED8, MED9, MED10, MED11, MED12, MED13, MED13L, MED14, MED15, MED16, MED17, MED18, MED19, MED20, MED21, MED22, MED23, MED24, MED25, MED26, MED27, MED29, MED30, MED31, CCNC, CDK8 and CDC2L6/CDK11. The MED12, MED13, CCNC and CDK8 subunits form a distinct module termed the CDK8 module. Mediator containing the CDK8 module is less active than Mediator lacking this module in supporting transcriptional activation. Individual preparations of the Mediator complex lacking one or more distinct subunits have been variously termed ARC, CRSP, DRIP, PC2, SMCC and TRAP. Associates with the MED18/MED20 heteromer.

Its subcellular location is the nucleus. Its function is as follows. Component of the Mediator complex, a coactivator involved in the regulated transcription of nearly all RNA polymerase II-dependent genes. Mediator functions as a bridge to convey information from gene-specific regulatory proteins to the basal RNA polymerase II transcription machinery. Mediator is recruited to promoters by direct interactions with regulatory proteins and serves as a scaffold for the assembly of a functional preinitiation complex with RNA polymerase II and the general transcription factors. The chain is Mediator of RNA polymerase II transcription subunit 29 (MED29) from Pongo abelii (Sumatran orangutan).